Here is an 817-residue protein sequence, read N- to C-terminus: Anaphase-promoting complex subunit 4 (817 aa).

Phosphotyrosine is present on Y469. A phosphoserine mark is found at S757 and S758. K772 participates in a covalent cross-link: Glycyl lysine isopeptide (Lys-Gly) (interchain with G-Cter in SUMO2). Residues S777 and S779 each carry the phosphoserine modification. K798 is covalently cross-linked (Glycyl lysine isopeptide (Lys-Gly) (interchain with G-Cter in SUMO2)).

Belongs to the APC4 family. As to quaternary structure, the mammalian APC/C is composed at least of 14 distinct subunits ANAPC1, ANAPC2, CDC27/APC3, ANAPC4, ANAPC5, CDC16/APC6, ANAPC7, CDC23/APC8, ANAPC10, ANAPC11, CDC26/APC12, ANAPC13, ANAPC15 and ANAPC16 that assemble into a complex of at least 19 chains with a combined molecular mass of around 1.2 MDa; APC/C interacts with FZR1 and FBXO5. In the context of the APC/C complex, directly interacts with UBE2S.

It is found in the nucleus. It participates in protein modification; protein ubiquitination. Its function is as follows. Component of the anaphase promoting complex/cyclosome (APC/C), a cell cycle-regulated E3 ubiquitin ligase that controls progression through mitosis and the G1 phase of the cell cycle. The APC/C complex acts by mediating ubiquitination and subsequent degradation of target proteins: it mainly mediates the formation of 'Lys-11'-linked polyubiquitin chains and, to a lower extent, the formation of 'Lys-48'- and 'Lys-63'-linked polyubiquitin chains. The APC/C complex catalyzes assembly of branched 'Lys-11'-/'Lys-48'-linked branched ubiquitin chains on target proteins. This is Anaphase-promoting complex subunit 4 (ANAPC4) from Pongo abelii (Sumatran orangutan).